A 57-amino-acid polypeptide reads, in one-letter code: MAVQQRRSSKHRRDKRRSHDALTAQALSVCQKCGKKKLFHRVCSCGMYGDLRVKKAY.

The segment at 1–21 (MAVQQRRSSKHRRDKRRSHDA) is disordered. Positions 7-18 (RSSKHRRDKRRS) are enriched in basic residues.

It belongs to the bacterial ribosomal protein bL32 family.

This chain is Large ribosomal subunit protein bL32 (rpmF), found in Mycoplasma pneumoniae (strain ATCC 29342 / M129 / Subtype 1) (Mycoplasmoides pneumoniae).